The following is a 366-amino-acid chain: tRNA/tmRNA (uracil-C(5))-methyltransferase (366 aa).

S-adenosyl-L-methionine is bound by residues Gln190, Tyr218, Asn223, Glu239, and Asp299. Catalysis depends on Cys324, which acts as the Nucleophile. The Proton acceptor role is filled by Glu358.

It belongs to the class I-like SAM-binding methyltransferase superfamily. RNA M5U methyltransferase family. TrmA subfamily.

The catalysed reaction is uridine(54) in tRNA + S-adenosyl-L-methionine = 5-methyluridine(54) in tRNA + S-adenosyl-L-homocysteine + H(+). It carries out the reaction uridine(341) in tmRNA + S-adenosyl-L-methionine = 5-methyluridine(341) in tmRNA + S-adenosyl-L-homocysteine + H(+). Functionally, dual-specificity methyltransferase that catalyzes the formation of 5-methyluridine at position 54 (m5U54) in all tRNAs, and that of position 341 (m5U341) in tmRNA (transfer-mRNA). The chain is tRNA/tmRNA (uracil-C(5))-methyltransferase from Escherichia coli O17:K52:H18 (strain UMN026 / ExPEC).